The primary structure comprises 369 residues: UDP-N-acetylglucosamine--N-acetylmuramyl-(pentapeptide) pyrophosphoryl-undecaprenol N-acetylglucosamine transferase (369 aa).

UDP-N-acetyl-alpha-D-glucosamine contacts are provided by residues 15-17 (TGG), Asn126, Arg169, Ser197, and Gln299.

Belongs to the glycosyltransferase 28 family. MurG subfamily.

It is found in the cell inner membrane. It catalyses the reaction di-trans,octa-cis-undecaprenyl diphospho-N-acetyl-alpha-D-muramoyl-L-alanyl-D-glutamyl-meso-2,6-diaminopimeloyl-D-alanyl-D-alanine + UDP-N-acetyl-alpha-D-glucosamine = di-trans,octa-cis-undecaprenyl diphospho-[N-acetyl-alpha-D-glucosaminyl-(1-&gt;4)]-N-acetyl-alpha-D-muramoyl-L-alanyl-D-glutamyl-meso-2,6-diaminopimeloyl-D-alanyl-D-alanine + UDP + H(+). Its pathway is cell wall biogenesis; peptidoglycan biosynthesis. In terms of biological role, cell wall formation. Catalyzes the transfer of a GlcNAc subunit on undecaprenyl-pyrophosphoryl-MurNAc-pentapeptide (lipid intermediate I) to form undecaprenyl-pyrophosphoryl-MurNAc-(pentapeptide)GlcNAc (lipid intermediate II). This Methylorubrum extorquens (strain CM4 / NCIMB 13688) (Methylobacterium extorquens) protein is UDP-N-acetylglucosamine--N-acetylmuramyl-(pentapeptide) pyrophosphoryl-undecaprenol N-acetylglucosamine transferase.